The sequence spans 149 residues: Protein SprT-like (149 aa).

The SprT-like domain maps to 4-143; it reads TDYVKQVSLE…CGLCRGKLLL (140 aa). Zn(2+) is bound at residue His-64. Residue Glu-65 is part of the active site. His-68 is a binding site for Zn(2+).

It belongs to the SprT family. Zn(2+) is required as a cofactor.

It is found in the cytoplasm. The protein is Protein SprT-like of Streptococcus pneumoniae (strain Taiwan19F-14).